Here is a 385-residue protein sequence, read N- to C-terminus: Trichodiene synthase (385 aa).

It belongs to the trichodiene synthase family.

It catalyses the reaction (2E,6E)-farnesyl diphosphate = trichodiene + diphosphate. It participates in sesquiterpene biosynthesis; trichothecene biosynthesis. Its function is as follows. TS is a member of the terpene cyclase group of enzymes. It catalyzes the isomerization and cyclization of farnesyl pyro-phosphate to form trichodiene, the first cyclic intermediate in the biosynthetic pathway for trichothecenes. It serves to branch trichothecene biosynthesis from the isoprenoid pathway. The chain is Trichodiene synthase (TRI5) from Paramyrothecium roridum (Myrothecium leaf spot fungus).